We begin with the raw amino-acid sequence, 259 residues long: Keratin-associated protein 10-8 (259 aa).

The 19 X 5 AA repeats of C-C-X(3) stretch occupies residues 26–243; that stretch reads HVSRVSSPST…SCQPSCCHPA (218 aa). 19 repeat units span residues 50–54, 60–64, 65–69, 98–102, 108–112, 118–122, 123–127, 133–137, 145–149, 155–159, 165–169, 170–174, 175–179, 187–191, 197–201, 202–206, 221–225, 228–232, and 239–243.

The protein belongs to the KRTAP type 10 family. In terms of assembly, interacts with hair keratins. In terms of tissue distribution, restricted to a narrow region of the hair fiber cuticle, lying approximately 20 cell layers above the apex of the dermal papilla of the hair root; not detected in any other tissues.

In the hair cortex, hair keratin intermediate filaments are embedded in an interfilamentous matrix, consisting of hair keratin-associated proteins (KRTAP), which are essential for the formation of a rigid and resistant hair shaft through their extensive disulfide bond cross-linking with abundant cysteine residues of hair keratins. The matrix proteins include the high-sulfur and high-glycine-tyrosine keratins. The sequence is that of Keratin-associated protein 10-8 (KRTAP10-8) from Homo sapiens (Human).